The primary structure comprises 260 residues: Cytochrome c oxidase subunit 3 (260 aa).

Residues 1 to 15 (MTHQTHAYHMVNPSP) are Mitochondrial matrix-facing. Residues 16–34 (WPLTGALSALLMTSGLAMW) form a helical membrane-spanning segment. The Mitochondrial intermembrane portion of the chain corresponds to 35 to 40 (FHFNST). A helical transmembrane segment spans residues 41-66 (ALLMIGLTTNMLTMYQWWRDIIREST). Residues 67–72 (FQGHHT) lie on the Mitochondrial matrix side of the membrane. The chain crosses the membrane as a helical span at residues 73-105 (PAVQKGLRYGMILFIISEVLFFTGFFWAFYHSS). Topologically, residues 106–128 (LAPTPELGGCWPPTGIHPLNPLE) are mitochondrial intermembrane. The chain crosses the membrane as a helical span at residues 129 to 152 (VPLLNTSVLLASGVSITWAHHSLM). Over 153–155 (EGD) the chain is Mitochondrial matrix. The helical transmembrane segment at 156-183 (RNHMLQALFITITLGVYFTLLQASEYYE) threads the bilayer. The Mitochondrial intermembrane portion of the chain corresponds to 184–190 (APFTISD). Residues 191 to 223 (GVYGSTFFVATGFHGLHVIIGSTFLIVCFFRQL) traverse the membrane as a helical segment. Topologically, residues 224–232 (KFHFTSNHH) are mitochondrial matrix. Residues 233 to 256 (FGFEAAAWYWHFVDVVWLFLYVSI) form a helical membrane-spanning segment. The Mitochondrial intermembrane segment spans residues 257–260 (YWWG).

Belongs to the cytochrome c oxidase subunit 3 family. In terms of assembly, component of the cytochrome c oxidase (complex IV, CIV), a multisubunit enzyme composed of 14 subunits. The complex is composed of a catalytic core of 3 subunits MT-CO1, MT-CO2 and MT-CO3, encoded in the mitochondrial DNA, and 11 supernumerary subunits COX4I, COX5A, COX5B, COX6A, COX6B, COX6C, COX7A, COX7B, COX7C, COX8 and NDUFA4, which are encoded in the nuclear genome. The complex exists as a monomer or a dimer and forms supercomplexes (SCs) in the inner mitochondrial membrane with NADH-ubiquinone oxidoreductase (complex I, CI) and ubiquinol-cytochrome c oxidoreductase (cytochrome b-c1 complex, complex III, CIII), resulting in different assemblies (supercomplex SCI(1)III(2)IV(1) and megacomplex MCI(2)III(2)IV(2)).

The protein resides in the mitochondrion inner membrane. The enzyme catalyses 4 Fe(II)-[cytochrome c] + O2 + 8 H(+)(in) = 4 Fe(III)-[cytochrome c] + 2 H2O + 4 H(+)(out). Functionally, component of the cytochrome c oxidase, the last enzyme in the mitochondrial electron transport chain which drives oxidative phosphorylation. The respiratory chain contains 3 multisubunit complexes succinate dehydrogenase (complex II, CII), ubiquinol-cytochrome c oxidoreductase (cytochrome b-c1 complex, complex III, CIII) and cytochrome c oxidase (complex IV, CIV), that cooperate to transfer electrons derived from NADH and succinate to molecular oxygen, creating an electrochemical gradient over the inner membrane that drives transmembrane transport and the ATP synthase. Cytochrome c oxidase is the component of the respiratory chain that catalyzes the reduction of oxygen to water. Electrons originating from reduced cytochrome c in the intermembrane space (IMS) are transferred via the dinuclear copper A center (CU(A)) of subunit 2 and heme A of subunit 1 to the active site in subunit 1, a binuclear center (BNC) formed by heme A3 and copper B (CU(B)). The BNC reduces molecular oxygen to 2 water molecules using 4 electrons from cytochrome c in the IMS and 4 protons from the mitochondrial matrix. The protein is Cytochrome c oxidase subunit 3 (MT-CO3) of Bos mutus grunniens (Wild yak).